The following is a 337-amino-acid chain: Leucine-rich repeat-containing protein 39 (337 aa).

LRR repeat units lie at residues 84–105 (QLQE…IGRF), 107–128 (HLIV…IGLL), 130–152 (RLQE…SNCT), 153–176 (SLEK…SKLL), 177–198 (KLTH…VLDM), 200–221 (ALEW…LDRM), 223–244 (SLHT…IKNM), 246–267 (NLGT…MEEM), and 269–290 (NLRF…PPSD).

In terms of assembly, interacts with MYH7 (via C-terminus). As to expression, expressed in heart and skeletal muscle.

Its subcellular location is the cytoplasm. It localises to the myofibril. The protein localises to the sarcomere. The protein resides in the m line. In terms of biological role, component of the sarcomeric M-band which plays a role in myocyte response to biomechanical stress. May regulate expression of other M-band proteins via an SRF-dependent pathway. Important for normal contractile function in heart. This chain is Leucine-rich repeat-containing protein 39, found in Mus musculus (Mouse).